A 261-amino-acid chain; its full sequence is Kallikrein-1E2 (261 aa).

The N-terminal stretch at 1–17 (MWFLVLCLDLSLGETGA) is a signal peptide. The propeptide at 18-24 (LPPIQSR) is activation peptide. The Peptidase S1 domain maps to 25 to 258 (IIGGWECEKH…HLKWIKETIE (234 aa)). 5 disulfide bridges follow: Cys-31–Cys-173, Cys-50–Cys-66, Cys-152–Cys-219, Cys-184–Cys-198, and Cys-209–Cys-234. His-65 functions as the Charge relay system in the catalytic mechanism. Residue Asn-79 is glycosylated (N-linked (GlcNAc...) asparagine). Asp-120 functions as the Charge relay system in the catalytic mechanism. Catalysis depends on Ser-213, which acts as the Charge relay system.

Belongs to the peptidase S1 family. Kallikrein subfamily. As to expression, detected in prostate and semen.

It is found in the secreted. It catalyses the reaction Preferential cleavage of Arg-|-Xaa bonds in small molecule substrates. Highly selective action to release kallidin (lysyl-bradykinin) from kininogen involves hydrolysis of Met-|-Xaa or Leu-|-Xaa.. Functionally, glandular kallikreins cleave Met-Lys and Arg-Ser bonds in kininogen to release Lys-bradykinin. The sequence is that of Kallikrein-1E2 (KLK1E2) from Equus caballus (Horse).